Here is a 484-residue protein sequence, read N- to C-terminus: Fork head protein homolog 1 (484 aa).

The FHA domain maps to 76 to 142 (VTIGRNTDSL…NGAKVNFRRI (67 aa)). The fork-head DNA-binding region spans 302–393 (IKPPQSYASM…RRDFLNKWNA (92 aa)).

In terms of assembly, interacts (via FHA domain) with ECM30, GLN3, URE2, MPH1 AND FDO1. Interacts with the origin recognition complex (ORC) composed of ORC1 to ORC6.

It is found in the nucleus. Its subcellular location is the cytoplasm. It localises to the cytosol. Functionally, transcription factor that regulates the expression of the CLB2 cluster of genes during the G2/M phase of the mitotic cell cycle. The CLB2 cluster of genes includes mitotic regulators such as CLB1, CLB2, CDC5 and CDC20 as well as SWI5 and ACE2, transcription factors required for the subsequent temporal wave of cell cycle regulated gene expression in the M/G1 phase interval. Involved in HMRa silencing. FKH1 and FKH2 associate with the coding regions of active genes and influence, in opposing ways, transcriptional elongation and termination, and coordinate early transcription elongation and pre-mRNA processing. Both FKH1 and FKH2 play a role as regulators of lifespan in collaboration with the anaphase-promoting complex (APC), likely through combined regulation of stress response, genomic stability, and cell cycle regulation. FKH1 and FKH2 function also in controlling yeast cell morphology by preventing preudohyphal growth. Acts as a rate-limiting replication origin activator via its interaction with the origin recognition complex (ORC). Plays a transcription-independent role in recombination donor preference during mating-type switching through binding to the recombination enhancer (RE), a 700-bp cis-acting element that controls recombination along the left arm of chromosome III. The protein is Fork head protein homolog 1 of Saccharomyces cerevisiae (strain ATCC 204508 / S288c) (Baker's yeast).